The sequence spans 318 residues: Probable carboxylesterase 1 (318 aa).

Position 1 is an N-acetylmethionine (methionine 1). The Involved in the stabilization of the negatively charged intermediate by the formation of the oxyanion hole motif lies at 79–81 (HGG). Residues serine 163, aspartate 258, and histidine 290 contribute to the active site.

The protein belongs to the 'GDXG' lipolytic enzyme family. Expressed in roots, stems, flowers and siliques.

The enzyme catalyses a carboxylic ester + H2O = an alcohol + a carboxylate + H(+). In terms of biological role, carboxylesterase acting on esters with varying acyl chain length. In Arabidopsis thaliana (Mouse-ear cress), this protein is Probable carboxylesterase 1 (CXE1).